Here is a 232-residue protein sequence, read N- to C-terminus: Phosphatidylserine decarboxylase proenzyme (232 aa).

Catalysis depends on Ser190, which acts as the Schiff-base intermediate with substrate; via pyruvic acid. Position 190 is a pyruvic acid (Ser); by autocatalysis (Ser190).

This sequence belongs to the phosphatidylserine decarboxylase family. PSD-A subfamily. Heterodimer of a large membrane-associated beta subunit and a small pyruvoyl-containing alpha subunit. Pyruvate is required as a cofactor. Is synthesized initially as an inactive proenzyme. Formation of the active enzyme involves a self-maturation process in which the active site pyruvoyl group is generated from an internal serine residue via an autocatalytic post-translational modification. Two non-identical subunits are generated from the proenzyme in this reaction, and the pyruvate is formed at the N-terminus of the alpha chain, which is derived from the carboxyl end of the proenzyme. The post-translation cleavage follows an unusual pathway, termed non-hydrolytic serinolysis, in which the side chain hydroxyl group of the serine supplies its oxygen atom to form the C-terminus of the beta chain, while the remainder of the serine residue undergoes an oxidative deamination to produce ammonia and the pyruvoyl prosthetic group on the alpha chain.

The protein localises to the cell membrane. The catalysed reaction is a 1,2-diacyl-sn-glycero-3-phospho-L-serine + H(+) = a 1,2-diacyl-sn-glycero-3-phosphoethanolamine + CO2. It functions in the pathway phospholipid metabolism; phosphatidylethanolamine biosynthesis; phosphatidylethanolamine from CDP-diacylglycerol: step 2/2. Functionally, catalyzes the formation of phosphatidylethanolamine (PtdEtn) from phosphatidylserine (PtdSer). The sequence is that of Phosphatidylserine decarboxylase proenzyme from Bartonella bacilliformis (strain ATCC 35685 / KC583 / Herrer 020/F12,63).